A 700-amino-acid polypeptide reads, in one-letter code: MAPADLASEGPKLEDPPAPHLFGKCPSGLIMAKLETLPVRADPGRDPLLAFAPRPSELGPPDPRLTMGSVGSGVTHAQEFPMKSVGTRTGGGGNQGSFPGPRSGGSGANRERPGRYPSEDKVLANSLYLNGELRGSDHTDVCGNVVGSSGGSSSSGGSDKAPPQYREPNHPPKLLTTSGKLDQCSEPLVRPSAFKPVVPKNFHSMQNLCPPQTNGTPEGRQGPAGLKGGLDKSRTMTPAGGSGGGLSDSGRNSLTSLPTYSSSYSQHLAPLSASTSHINRIGTAGYSSGSSGGGSGYQDLGTSDSGRASSKSGSSSSMGRSGHLGSGEGGNGGLPFAACSPPSPSALIQELEERLWEKEQEVAALRRSLEQSEAAVAQVLEERQKAWERELAELRQGCSGKLQQVARRAQRAQQGLQLQVLRLQQDKKQLQEEAAQLIRQREELEDKVAVCQKEQADFLPRMEETKWEVCQKAGEISLLKQQLKDSQADVSQKLSEIVGLRSQLREGRASLREKEEQLLSLRDSFGSKQASLELSEGELPPACLKPALTPVDLVEPQEALASCESDEAKMRRQAGVAAAASLVSVDGEVEAGGEGGTRALRREVGRLQAELAAERRARERQGASFAEERRVWLEEKEKVIEYQKQLQLSYVEMYQRNQQLERRLRERGAAGGSSTPTPQHGEEKKAWTPSRLERIESTEI.

4 disordered regions span residues 1–20 (MAPADLASEGPKLEDPPAPH), 40–121 (RADP…SEDK), 133–188 (LRGS…SEPL), and 202–344 (FHSM…PPSP). Residues 109 to 121 (NRERPGRYPSEDK) show a composition bias toward basic and acidic residues. Residues 203-216 (HSMQNLCPPQTNGT) show a composition bias toward polar residues. Composition is skewed to low complexity over residues 248-265 (DSGRNSLTSLPTYSSSYS) and 301-321 (GTSDSGRASSKSGSSSSMGRS). Residues 322 to 333 (GHLGSGEGGNGG) show a composition bias toward gly residues. 2 positions are modified to phosphoserine: Ser-343 and Ser-345. Coiled coils occupy residues 345 to 523 (SALI…SLRD) and 597 to 666 (TRAL…RLRE). Residues 662-700 (RRLRERGAAGGSSTPTPQHGEEKKAWTPSRLERIESTEI) form a disordered region. Residues 680–700 (HGEEKKAWTPSRLERIESTEI) are compositionally biased toward basic and acidic residues.

Belongs to the LZTS3 family. As to quaternary structure, interacts (via C-terminus) with SHANK3 (via PDZ domain). Interacts (via coiled coil) with SIPA1L1. Can form homooligomers.

The protein resides in the synapse. Its subcellular location is the postsynaptic density. It is found in the cell projection. The protein localises to the dendritic spine. It localises to the dendrite. The protein resides in the cytoplasm. Its subcellular location is the cytoskeleton. May be involved in promoting the maturation of dendritic spines, probably via regulating SIPA1L1 levels at the postsynaptic density of synapses. The chain is Leucine zipper putative tumor suppressor 3 from Mus musculus (Mouse).